A 639-amino-acid polypeptide reads, in one-letter code: Homeobox protein 9 (639 aa).

Disordered stretches follow at residues 1–45 (MLNS…DKQN), 66–144 (SPNH…DDNS), 157–179 (NQNQ…QNQN), 262–313 (PRTL…SSGT), 331–422 (SESS…QTSN), and 436–547 (TNKN…NNEN). Residues 72–109 (ANNNNNNNNNNNNNNNNNNNNNNNNNNNNNNNNNNNIQ) adopt a coiled-coil conformation. Low complexity-rich tracts occupy residues 73–119 (NNNN…SNNN) and 126–142 (GSLN…GNDD). Coiled coils occupy residues 152–184 (SNQN…KDSW) and 230–296 (EIEI…NINE). The span at 266–300 (NNSSDSISENINNNNNNNNNNNNNNNNNINESNIN) shows a compositional bias: low complexity. Basic and acidic residues predominate over residues 345-354 (QPRKVPRDLN). Residues 358–399 (NNNINYANNNNNNNNNNNNNNHNNNINNNNNNNNNNNNNSNN) are compositionally biased toward low complexity. Residues 365-396 (NNNNNNNNNNNNNNHNNNINNNNNNNNNNNNN) are a coiled coil. Residues 405–422 (GSITNSVNIKPSKDQTSN) show a composition bias toward polar residues. Low complexity predominate over residues 436–526 (TNKNNNNNNN…NNNLTSSSNN (91 aa)). The segment covering 532–547 (GNTSPNQSSANGNNEN) has biased composition (polar residues). A DNA-binding region (homeobox) is located at residues 559 to 621 (KRKKRGKLPG…NARRRILPRQ (63 aa)).

Its subcellular location is the nucleus. In terms of biological role, putative transcription factor. The chain is Homeobox protein 9 (hbx9) from Dictyostelium discoideum (Social amoeba).